Here is a 341-residue protein sequence, read N- to C-terminus: Anthranilate phosphoribosyltransferase (341 aa).

5-phospho-alpha-D-ribose 1-diphosphate contacts are provided by residues G79, G82–D83, T87, N89–T92, K107–S115, and S119. Residue G79 participates in anthranilate binding. Mg(2+) is bound at residue S91. N110 provides a ligand contact to anthranilate. R165 provides a ligand contact to anthranilate. Residues D224 and E225 each coordinate Mg(2+).

The protein belongs to the anthranilate phosphoribosyltransferase family. Homodimer. Mg(2+) serves as cofactor.

It carries out the reaction N-(5-phospho-beta-D-ribosyl)anthranilate + diphosphate = 5-phospho-alpha-D-ribose 1-diphosphate + anthranilate. The protein operates within amino-acid biosynthesis; L-tryptophan biosynthesis; L-tryptophan from chorismate: step 2/5. Its function is as follows. Catalyzes the transfer of the phosphoribosyl group of 5-phosphorylribose-1-pyrophosphate (PRPP) to anthranilate to yield N-(5'-phosphoribosyl)-anthranilate (PRA). The polypeptide is Anthranilate phosphoribosyltransferase (Bacillus cereus (strain ZK / E33L)).